The chain runs to 486 residues: Maintenance of mitochondrial morphology protein 1 (486 aa).

Residues 1-20 (MNFQQSAIPPFSFLLSFTQG) are Lumenal-facing. A helical membrane pass occupies residues 21–41 (FLLGQLSVVLLIGAFIKFFIF). Residues 42 to 486 (GEAPPPPSRG…GSLPDGAVGN (445 aa)) lie on the Cytoplasmic side of the membrane. 3 disordered regions span residues 70-96 (TNEA…SSST), 271-320 (TPPL…SPKS), and 387-486 (RTGV…AVGN). Residues 83–96 (STSNVLRPVPSSST) show a composition bias toward polar residues. The SMP-LTD domain maps to 128-379 (QPESLDWFNV…EPRVQVVGLP (252 aa)). A compositionally biased stretch (pro residues) spans 271–282 (TPPLHTPSPSPA). Over residues 292–306 (QSQPENNSSNPNQQS) the composition is skewed to low complexity. Polar residues-rich tracts occupy residues 398 to 407 (TGSNAASRSA) and 440 to 450 (DSVSRSSSFNV). Residues 460 to 474 (MTREDSRGAISDDFH) show a composition bias toward basic and acidic residues.

This sequence belongs to the MMM1 family. Homodimer. Component of the ER-mitochondria encounter structure (ERMES) or MDM complex, composed of mmm1, mdm10, mdm12 and mdm34. A mmm1 homodimer associates with one molecule of mdm12 on each side in a pairwise head-to-tail manner, and the SMP-LTD domains of mmm1 and mdm12 generate a continuous hydrophobic tunnel for phospholipid trafficking.

It is found in the endoplasmic reticulum membrane. Functionally, component of the ERMES/MDM complex, which serves as a molecular tether to connect the endoplasmic reticulum (ER) and mitochondria. Components of this complex are involved in the control of mitochondrial shape and protein biogenesis, and function in nonvesicular lipid trafficking between the ER and mitochondria. The mdm12-mmm1 subcomplex functions in the major beta-barrel assembly pathway that is responsible for biogenesis of all outer membrane beta-barrel proteins, and acts in a late step after the SAM complex. The mdm10-mdm12-mmm1 subcomplex further acts in the TOM40-specific pathway after the action of the mdm12-mmm1 complex. Essential for establishing and maintaining the structure of mitochondria and maintenance of mtDNA nucleoids. This is Maintenance of mitochondrial morphology protein 1 from Aspergillus terreus (strain NIH 2624 / FGSC A1156).